The following is a 306-amino-acid chain: MSGGLDVLQMKEEDVLKFLAAGTHLGGTNLDFQMEQYIYKRKSDGIYIINLKRTWEKLLLAARAIVAIENPADVCVISSRNTGQRAVLKFASASGATPIAGRFTPGTFTNQIQAAFREPRLLVVTDPRADHQPITEASYVNIPTIALCNTDSPLRYVDIAIPCNNKGAHSVGLMWWMLAREVLRMRGTISREHPWEVMPDLYFYRDPEEIEKEEQAAAEKATTKEEFQGEWTAPVAEFPQAEVADWSEGVQVPSVPIQQFTAERTDVPPAPKPTEDWSTQPASTDDWSAAPTAQASEWTGTTTEWS.

Serine 2 carries the post-translational modification N-acetylserine. Laminin-binding regions lie at residues 161–180 and 205–229; these read IPCN…MLAR and RDPE…EFQG. [DE]-W-[ST] repeat units lie at residues 230–232, 245–247, 276–278, 286–288, and 304–306; these read EWT, DWS, and EWS. The laminin-binding stretch occupies residues 242-306; sequence EVADWSEGVQ…EWTGTTTEWS (65 aa). A disordered region spans residues 247–306; it reads SEGVQVPSVPIQQFTAERTDVPPAPKPTEDWSTQPASTDDWSAAPTAQASEWTGTTTEWS. Residues 276-306 show a composition bias toward polar residues; the sequence is DWSTQPASTDDWSAAPTAQASEWTGTTTEWS.

Belongs to the universal ribosomal protein uS2 family. Monomer (37LRP) and homodimer (67LR). Component of the small ribosomal subunit. Mature ribosomes consist of a small (40S) and a large (60S) subunit. The 40S subunit contains about 33 different proteins and 1 molecule of RNA (18S). The 60S subunit contains about 49 different proteins and 3 molecules of RNA (28S, 5.8S and 5S). Interacts with rps21. Interacts with several laminins including at least lamb1. Interacts with mdk. In terms of processing, acylated. Acylation may be a prerequisite for conversion of the monomeric 37 kDa laminin receptor precursor (37LRP) to the mature dimeric 67 kDa laminin receptor (67LR), and may provide a mechanism for membrane association. Cleaved by stromelysin-3 (ST3) at the cell surface. Cleavage by stromelysin-3 may be a mechanism to alter cell-extracellular matrix interactions.

It is found in the cell membrane. The protein localises to the cytoplasm. Its subcellular location is the nucleus. Functionally, required for the assembly and/or stability of the 40S ribosomal subunit. Required for the processing of the 20S rRNA-precursor to mature 18S rRNA in a late step of the maturation of 40S ribosomal subunits. Also functions as a cell surface receptor for laminin. Plays a role in cell adhesion to the basement membrane and in the consequent activation of signaling transduction pathways. May play a role in cell fate determination and tissue morphogenesis. In Xenopus laevis (African clawed frog), this protein is Small ribosomal subunit protein uS2 (rpsa).